The sequence spans 201 residues: MSRYRGPRFKKIRRLGALPGLTNKRPRAGSDLRNQSRSGKKSQYRIRLEEKQKLRFHYGLTERQLLKYVRIAGKAKGSTGQVLLQLLEMRLDNILFRLGMAPTIPGARQLVNHRHILVNGRIVDIPSYRCKPRDTIAARDEQKSRALIQNSLDSSPPEELPNHLTLQPFQYKGLVNQIIDSKWVGLKINELLVVEYYSRQT.

The segment at 15 to 44 (LGALPGLTNKRPRAGSDLRNQSRSGKKSQY) is disordered. In terms of domain architecture, S4 RNA-binding spans 89–149 (MRLDNILFRL…DEQKSRALIQ (61 aa)).

Belongs to the universal ribosomal protein uS4 family. Part of the 30S ribosomal subunit. Contacts protein S5. The interaction surface between S4 and S5 is involved in control of translational fidelity.

It is found in the plastid. It localises to the chloroplast. In terms of biological role, one of the primary rRNA binding proteins, it binds directly to 16S rRNA where it nucleates assembly of the body of the 30S subunit. Functionally, with S5 and S12 plays an important role in translational accuracy. This Helianthus annuus (Common sunflower) protein is Small ribosomal subunit protein uS4c (rps4).